The chain runs to 251 residues: Triosephosphate isomerase (251 aa).

9–11 serves as a coordination point for substrate; it reads NWK. His95 functions as the Electrophile in the catalytic mechanism. Residue Glu167 is the Proton acceptor of the active site. Substrate-binding positions include Gly173, Ser212, and 233-234; that span reads GG.

The protein belongs to the triosephosphate isomerase family. Homodimer.

The protein localises to the cytoplasm. The catalysed reaction is D-glyceraldehyde 3-phosphate = dihydroxyacetone phosphate. Its pathway is carbohydrate biosynthesis; gluconeogenesis. It participates in carbohydrate degradation; glycolysis; D-glyceraldehyde 3-phosphate from glycerone phosphate: step 1/1. In terms of biological role, involved in the gluconeogenesis. Catalyzes stereospecifically the conversion of dihydroxyacetone phosphate (DHAP) to D-glyceraldehyde-3-phosphate (G3P). In Pseudomonas fluorescens (strain Pf0-1), this protein is Triosephosphate isomerase.